The primary structure comprises 449 residues: Phosphoglucosamine mutase (449 aa).

Ser101 functions as the Phosphoserine intermediate in the catalytic mechanism. The Mg(2+) site is built by Ser101, Asp242, Asp244, and Asp246. A Phosphoserine modification is found at Ser101.

The protein belongs to the phosphohexose mutase family. The cofactor is Mg(2+). Post-translationally, activated by phosphorylation.

The enzyme catalyses alpha-D-glucosamine 1-phosphate = D-glucosamine 6-phosphate. Its function is as follows. Catalyzes the conversion of glucosamine-6-phosphate to glucosamine-1-phosphate. The polypeptide is Phosphoglucosamine mutase (Hyphomonas neptunium (strain ATCC 15444)).